A 280-amino-acid polypeptide reads, in one-letter code: AGNRRPIWIMGHMVNAIGQIDEFVNLGANSIETDVSFDDNANPEYTYHGIPCDCGRNCKKYENFNDFLKGLRSATTPGNSKYQEKLVLVVFDLKTGSLYDNQANDAGKKLAKNLLQHYWNNGNNGGRAYIVLSIPDLNHYPLIKGFKDQLTKDGHPELMDKVGHDFSGNDDIGDVGKAYKKAGITGHIWQSDGITNCLPRGLSRVNAAVANRDSANGFINKVYYWTVDKRSTTRDALDAGVDGIMTNYPDVITDVLNEAAYKKKFRVATYDDNPWVTFKK.

The active site involves His12. Positions 32 and 34 each coordinate Mg(2+). His48 functions as the Nucleophile in the catalytic mechanism. 2 disulfides stabilise this stretch: Cys52/Cys58 and Cys54/Cys197. Position 92 (Asp92) interacts with Mg(2+).

Belongs to the arthropod phospholipase D family. Class II subfamily. Requires Mg(2+) as cofactor. As to expression, expressed by the venom gland.

It localises to the secreted. It carries out the reaction an N-(acyl)-sphingosylphosphocholine = an N-(acyl)-sphingosyl-1,3-cyclic phosphate + choline. The enzyme catalyses an N-(acyl)-sphingosylphosphoethanolamine = an N-(acyl)-sphingosyl-1,3-cyclic phosphate + ethanolamine. The catalysed reaction is a 1-acyl-sn-glycero-3-phosphocholine = a 1-acyl-sn-glycero-2,3-cyclic phosphate + choline. It catalyses the reaction a 1-acyl-sn-glycero-3-phosphoethanolamine = a 1-acyl-sn-glycero-2,3-cyclic phosphate + ethanolamine. Dermonecrotic toxins cleave the phosphodiester linkage between the phosphate and headgroup of certain phospholipids (sphingolipid and lysolipid substrates), forming an alcohol (often choline) and a cyclic phosphate. This toxin acts on sphingomyelin (SM). It may also act on ceramide phosphoethanolamine (CPE), lysophosphatidylcholine (LPC) and lysophosphatidylethanolamine (LPE), but not on lysophosphatidylserine (LPS), and lysophosphatidylglycerol (LPG). It acts by transphosphatidylation, releasing exclusively cyclic phosphate products as second products. Induces dermonecrosis, hemolysis, increased vascular permeability, edema, inflammatory response, and platelet aggregation. This is Dermonecrotic toxin LsSicTox-alphaIA1 from Loxosceles similis (Brazilian brown spider).